The primary structure comprises 445 residues: Xylose isomerase (445 aa).

Catalysis depends on residues histidine 107 and aspartate 110. The Mg(2+) site is built by glutamate 238, glutamate 274, histidine 277, aspartate 302, aspartate 313, aspartate 315, and aspartate 345.

This sequence belongs to the xylose isomerase family. Homotetramer. Requires Mg(2+) as cofactor.

Its subcellular location is the cytoplasm. It carries out the reaction alpha-D-xylose = alpha-D-xylulofuranose. The protein is Xylose isomerase of Bacillus velezensis (strain DSM 23117 / BGSC 10A6 / LMG 26770 / FZB42) (Bacillus amyloliquefaciens subsp. plantarum).